The sequence spans 481 residues: Lincomycin resistance protein (481 aa).

A run of 14 helical transmembrane segments spans residues 30-50, 67-87, 99-119, 127-147, 162-182, 185-205, 215-235, 245-265, 285-305, 318-338, 340-360, 374-394, 421-441, and 446-466; these read WVTLVFLAVLQLLIAVDVTVV, QLTWVVTGYTVVGGGLLMVGG, LLFGAFLFGASSLAAGLAPNL, FGQGAGEALSLPAAMSLIACS, VASVGLVLGFLLSGVITQLFS, WIFLINIPLVSLVLVAVLLLV, PVDLPGALLFTAAPLLLIFGV, LPLAVGSLLAAAVCAAAFVAV, LVANGATVLLSAALSTSFFLL, IEAGLSFLPLGLSLILACVLV, GLIERIGTTGAAVLGMALAGP, LLTSVFPGMILLLRMATGLVA, LGGASGIAVYVSIGFSPHLGG, and FTVAYSLAGIGLIAAVLAVLA.

The protein belongs to the major facilitator superfamily. TCR/Tet family.

It localises to the cell membrane. Functionally, proton-dependent transporter. May mediate the efflux of lincomycin. This Streptomyces lincolnensis protein is Lincomycin resistance protein (lmrA).